We begin with the raw amino-acid sequence, 216 residues long: Peptide methionine sulfoxide reductase MsrA (216 aa).

Cys54 is a catalytic residue.

Belongs to the MsrA Met sulfoxide reductase family.

It catalyses the reaction L-methionyl-[protein] + [thioredoxin]-disulfide + H2O = L-methionyl-(S)-S-oxide-[protein] + [thioredoxin]-dithiol. The catalysed reaction is [thioredoxin]-disulfide + L-methionine + H2O = L-methionine (S)-S-oxide + [thioredoxin]-dithiol. Has an important function as a repair enzyme for proteins that have been inactivated by oxidation. Catalyzes the reversible oxidation-reduction of methionine sulfoxide in proteins to methionine. The polypeptide is Peptide methionine sulfoxide reductase MsrA (Xanthomonas campestris pv. phaseoli).